A 170-amino-acid polypeptide reads, in one-letter code: Allophycocyanin subunit beta-18 (170 aa).

N74 bears the N4-methylasparagine mark. (2R,3E)-phycocyanobilin is bound at residue C84.

The protein belongs to the phycobiliprotein family. Heterodimer of an alpha and a beta chain. Post-translationally, contains one covalently linked bilin chromophore.

The protein localises to the plastid. The protein resides in the chloroplast thylakoid membrane. Its function is as follows. Light-harvesting photosynthetic bile pigment-protein from the phycobiliprotein complex. Allophycocyanin has a maximum absorption at approximately 650 nanometers. The protein is Allophycocyanin subunit beta-18 (apcF) of Cyanidium caldarium (Red alga).